The primary structure comprises 1168 residues: Probable serine/threonine protein kinase IRE (1168 aa).

Disordered regions lie at residues 1 to 165 and 377 to 444; these read MSTT…GVES and EKQN…KIQP. Positions 16–25 are enriched in low complexity; sequence PTTISTPTST. Basic and acidic residues-rich tracts occupy residues 39–54 and 107–130; these read RHSD…KTDE and QDDK…DARA. 2 stretches are compositionally biased toward polar residues: residues 146 to 163 and 401 to 414; these read QWSQ…NPGV and TARS…NFRM. The C2H2-type; atypical zinc finger occupies 488–507; the sequence is CRICEVEIPVVHVEEHSRIC. Disordered regions lie at residues 546–566, 602–622, and 717–744; these read PRAV…DLDE, GTKD…PRNS, and SSNA…LNPR. In terms of domain architecture, Protein kinase spans 754–1043; sequence FEIIKPISRG…AGEVKQHHFF (290 aa). ATP-binding positions include 760–768 and lysine 783; that span reads ISRGAFGRV. The active-site Proton acceptor is aspartate 877. Residues 1044–1144 enclose the AGC-kinase C-terminal domain; it reads KDINWDTLAR…KNLSQLASIN (101 aa).

This sequence belongs to the protein kinase superfamily. AGC Ser/Thr protein kinase family. In terms of tissue distribution, highly expressed in roots, elongating root hair cells and pollen grains.

The enzyme catalyses L-seryl-[protein] + ATP = O-phospho-L-seryl-[protein] + ADP + H(+). It carries out the reaction L-threonyl-[protein] + ATP = O-phospho-L-threonyl-[protein] + ADP + H(+). Modulates root tip growth. May play a common role in the tip growth of plant cells. This is Probable serine/threonine protein kinase IRE from Arabidopsis thaliana (Mouse-ear cress).